Consider the following 278-residue polypeptide: Large ribosomal subunit protein uL2 (278 aa).

Disordered regions lie at residues Met-1–His-53 and Val-224–Arg-278. Residues Glu-23–Leu-33 show a composition bias toward basic and acidic residues. Polar residues predominate over residues Arg-258 to Met-267. Over residues Val-269–Arg-278 the composition is skewed to basic residues.

The protein belongs to the universal ribosomal protein uL2 family. Part of the 50S ribosomal subunit. Forms a bridge to the 30S subunit in the 70S ribosome.

In terms of biological role, one of the primary rRNA binding proteins. Required for association of the 30S and 50S subunits to form the 70S ribosome, for tRNA binding and peptide bond formation. It has been suggested to have peptidyltransferase activity; this is somewhat controversial. Makes several contacts with the 16S rRNA in the 70S ribosome. In Corynebacterium aurimucosum (strain ATCC 700975 / DSM 44827 / CIP 107346 / CN-1) (Corynebacterium nigricans), this protein is Large ribosomal subunit protein uL2.